Here is an 88-residue protein sequence, read N- to C-terminus: Small ribosomal subunit protein uS15 (88 aa).

It belongs to the universal ribosomal protein uS15 family. In terms of assembly, part of the 30S ribosomal subunit. Forms a bridge to the 50S subunit in the 70S ribosome, contacting the 23S rRNA.

One of the primary rRNA binding proteins, it binds directly to 16S rRNA where it helps nucleate assembly of the platform of the 30S subunit by binding and bridging several RNA helices of the 16S rRNA. In terms of biological role, forms an intersubunit bridge (bridge B4) with the 23S rRNA of the 50S subunit in the ribosome. This Mycoplasma capricolum subsp. capricolum (strain California kid / ATCC 27343 / NCTC 10154) protein is Small ribosomal subunit protein uS15.